The primary structure comprises 205 residues: Guanylate kinase (205 aa).

Positions 6 to 185 (GLLIVLSRPS…ACDRIKAIVV (180 aa)) constitute a Guanylate kinase-like domain. 13-20 (RPSGVGKG) serves as a coordination point for ATP.

Belongs to the guanylate kinase family.

It localises to the cytoplasm. The enzyme catalyses GMP + ATP = GDP + ADP. Functionally, essential for recycling GMP and indirectly, cGMP. The chain is Guanylate kinase from Bacillus cereus (strain ATCC 14579 / DSM 31 / CCUG 7414 / JCM 2152 / NBRC 15305 / NCIMB 9373 / NCTC 2599 / NRRL B-3711).